We begin with the raw amino-acid sequence, 455 residues long: Bifunctional protein GlmU (455 aa).

The interval 1–227 (MKLKAIILAA…YEEIMAVNSR (227 aa)) is pyrophosphorylase. UDP-N-acetyl-alpha-D-glucosamine is bound by residues 8 to 11 (LAAG), lysine 22, glutamine 72, and 77 to 78 (GT). Aspartate 100 provides a ligand contact to Mg(2+). UDP-N-acetyl-alpha-D-glucosamine is bound by residues glycine 137, glutamate 152, asparagine 167, and asparagine 225. A Mg(2+)-binding site is contributed by asparagine 225. A linker region spans residues 228–248 (EQLADVEAIMRRRIAKKHMAN). The N-acetyltransferase stretch occupies residues 249–455 (GVTIMNPEHV…WTKRKGLLKK (207 aa)). UDP-N-acetyl-alpha-D-glucosamine-binding residues include arginine 330 and lysine 348. Histidine 360 (proton acceptor) is an active-site residue. Positions 363 and 374 each coordinate UDP-N-acetyl-alpha-D-glucosamine. Acetyl-CoA contacts are provided by residues 383–384 (NY), serine 402, cysteine 420, and arginine 437.

In the N-terminal section; belongs to the N-acetylglucosamine-1-phosphate uridyltransferase family. The protein in the C-terminal section; belongs to the transferase hexapeptide repeat family. As to quaternary structure, homotrimer. The cofactor is Mg(2+).

Its subcellular location is the cytoplasm. It catalyses the reaction alpha-D-glucosamine 1-phosphate + acetyl-CoA = N-acetyl-alpha-D-glucosamine 1-phosphate + CoA + H(+). The enzyme catalyses N-acetyl-alpha-D-glucosamine 1-phosphate + UTP + H(+) = UDP-N-acetyl-alpha-D-glucosamine + diphosphate. The protein operates within nucleotide-sugar biosynthesis; UDP-N-acetyl-alpha-D-glucosamine biosynthesis; N-acetyl-alpha-D-glucosamine 1-phosphate from alpha-D-glucosamine 6-phosphate (route II): step 2/2. It functions in the pathway nucleotide-sugar biosynthesis; UDP-N-acetyl-alpha-D-glucosamine biosynthesis; UDP-N-acetyl-alpha-D-glucosamine from N-acetyl-alpha-D-glucosamine 1-phosphate: step 1/1. Its pathway is bacterial outer membrane biogenesis; LPS lipid A biosynthesis. Functionally, catalyzes the last two sequential reactions in the de novo biosynthetic pathway for UDP-N-acetylglucosamine (UDP-GlcNAc). The C-terminal domain catalyzes the transfer of acetyl group from acetyl coenzyme A to glucosamine-1-phosphate (GlcN-1-P) to produce N-acetylglucosamine-1-phosphate (GlcNAc-1-P), which is converted into UDP-GlcNAc by the transfer of uridine 5-monophosphate (from uridine 5-triphosphate), a reaction catalyzed by the N-terminal domain. In Alkaliphilus oremlandii (strain OhILAs) (Clostridium oremlandii (strain OhILAs)), this protein is Bifunctional protein GlmU.